Consider the following 179-residue polypeptide: Large ribosomal subunit protein eL18 (179 aa).

The protein belongs to the eukaryotic ribosomal protein eL18 family. As to quaternary structure, component of the large ribosomal subunit.

Its subcellular location is the cytoplasm. It localises to the cytosol. It is found in the rough endoplasmic reticulum. Functionally, component of the large ribosomal subunit. The ribosome is a large ribonucleoprotein complex responsible for the synthesis of proteins in the cell. In Salmo salar (Atlantic salmon), this protein is Large ribosomal subunit protein eL18 (rpl18).